The chain runs to 388 residues: MKRNFPKLIALSLIFSLSVTPIANAESNSNIKAKDKKHVQVNVEDKSVPTDVRNLAQKDYLSYVTSLDKIYNKEKASYTLGEPFKIYKFNKKSDGNYYFPVLNTEGNIDYIVTISPKITKYSSSSSKYTINVSPFLSKVLNQYKDQQITILTNSKGYYVVTQNHKAKLVLKTPRLEDKKLKKTESIPTGNNVTQLKQKASVTMPTSQFKSNNYTYNEQYINKLENFKIRETQGNNGWCAGYTMSELLNATYNTNKYHAEAVMRFLHPNLQGQRFQFTGLTPREMIYFGQTQGRSPQLLNRMTTYNEVDNLTKNNKGIAVLGSRVESRNGMHAGHAMAVVGNAKLDNGQEVIIIWNSWDNGFMTQDAKNNVIPVSNGDHYRWYSSIYGY.

The N-terminal stretch at 1–25 (MKRNFPKLIALSLIFSLSVTPIANA) is a signal peptide. Residues 26-214 (ESNSNIKAKD…TSQFKSNNYT (189 aa)) constitute a propeptide that is removed on maturation. Residues Cys-238, His-334, and Asn-355 contribute to the active site.

It belongs to the peptidase C47 family. As to quaternary structure, in the cytoplasm, prematurely activated/folded ScpA forms a stable non-covalent complex with ScpB. In terms of processing, cleavage leads to the activation of ScpA probably by an auto-catalytic manner.

The protein localises to the secreted. The catalysed reaction is Broad endopeptidase action on proteins including elastin, but rather limited hydrolysis of small-molecule substrates. Assays are conveniently made with hemoglobin, casein or Z-Phe-Arg-NHMec as substrate.. Prematurely activated/folded staphopain A is inhibited by staphostatin A (ScpB), which is probably required to protect staphylococcal cytoplasmic proteins from degradation by ScpA. Cysteine protease that plays an important role in the inhibition of host innate immune response. Cleaves host elastins found in connective tissues, pulmonary surfactant protein A in the lungs, and the chemokine receptor CXCR2 on leukocytes. Proteolytic cleavage of surfactant protein A impairs bacterial phagocytosis by neutrophils while CXCR2 degradation blocks neutrophil activation and chemotaxis. Additionally, promotes vascular leakage by activating the plasma kallikerin/kinin system, resulting in hypotension. This Staphylococcus aureus (strain COL) protein is Staphopain A (sspP).